Here is a 155-residue protein sequence, read N- to C-terminus: Transcriptional regulator MraZ (155 aa).

SpoVT-AbrB domains lie at 7-54 (TYEC…PMEE) and 83-126 (VKTV…DKDK).

The protein belongs to the MraZ family. As to quaternary structure, forms oligomers.

It localises to the cytoplasm. The protein resides in the nucleoid. This Christiangramia forsetii (strain DSM 17595 / CGMCC 1.15422 / KT0803) (Gramella forsetii) protein is Transcriptional regulator MraZ.